Reading from the N-terminus, the 319-residue chain is tRNA N6-adenosine threonylcarbamoyltransferase (319 aa).

Histidine 110 and histidine 114 together coordinate Fe cation. Residues 135–139, aspartate 168, glycine 181, aspartate 185, and asparagine 277 contribute to the substrate site; that span reads VVSGG. Aspartate 301 provides a ligand contact to Fe cation.

It belongs to the KAE1 / TsaD family. Fe(2+) serves as cofactor.

It localises to the cytoplasm. It carries out the reaction L-threonylcarbamoyladenylate + adenosine(37) in tRNA = N(6)-L-threonylcarbamoyladenosine(37) in tRNA + AMP + H(+). Its function is as follows. Required for the formation of a threonylcarbamoyl group on adenosine at position 37 (t(6)A37) in tRNAs that read codons beginning with adenine. Is involved in the transfer of the threonylcarbamoyl moiety of threonylcarbamoyl-AMP (TC-AMP) to the N6 group of A37, together with TsaE and TsaB. TsaD likely plays a direct catalytic role in this reaction. The protein is tRNA N6-adenosine threonylcarbamoyltransferase of Mycoplasma pneumoniae (strain ATCC 29342 / M129 / Subtype 1) (Mycoplasmoides pneumoniae).